A 219-amino-acid chain; its full sequence is 7-cyano-7-deazaguanine synthase (219 aa).

10 to 20 (FSGGQDSTTCL) lines the ATP pocket. 4 residues coordinate Zn(2+): C188, C196, C199, and C202.

It belongs to the QueC family. It depends on Zn(2+) as a cofactor.

It catalyses the reaction 7-carboxy-7-deazaguanine + NH4(+) + ATP = 7-cyano-7-deazaguanine + ADP + phosphate + H2O + H(+). It functions in the pathway purine metabolism; 7-cyano-7-deazaguanine biosynthesis. In terms of biological role, catalyzes the ATP-dependent conversion of 7-carboxy-7-deazaguanine (CDG) to 7-cyano-7-deazaguanine (preQ(0)). The chain is 7-cyano-7-deazaguanine synthase from Neisseria meningitidis serogroup C / serotype 2a (strain ATCC 700532 / DSM 15464 / FAM18).